Here is a 174-residue protein sequence, read N- to C-terminus: Shikimate kinase 2 (174 aa).

12–17 (GCGKTT) serves as a coordination point for ATP. Mg(2+) is bound by residues Thr-16 and Asp-32. Asp-34, Arg-58, and Gly-79 together coordinate substrate. Residues 112–126 (QAAPEEDLRPTLTGK) are LID domain. Arg-120 lines the ATP pocket. Arg-139 is a substrate binding site.

This sequence belongs to the shikimate kinase family. AroL subfamily. Monomer. The cofactor is Mg(2+).

The protein resides in the cytoplasm. The enzyme catalyses shikimate + ATP = 3-phosphoshikimate + ADP + H(+). It functions in the pathway metabolic intermediate biosynthesis; chorismate biosynthesis; chorismate from D-erythrose 4-phosphate and phosphoenolpyruvate: step 5/7. Its function is as follows. Catalyzes the specific phosphorylation of the 3-hydroxyl group of shikimic acid using ATP as a cosubstrate. This is Shikimate kinase 2 from Shigella dysenteriae serotype 1 (strain Sd197).